Consider the following 525-residue polypeptide: Light-independent protochlorophyllide reductase subunit B (525 aa).

Asp-36 is a [4Fe-4S] cluster binding site. The active-site Proton donor is the Asp-286. 421–422 is a substrate binding site; sequence GL.

It belongs to the ChlB/BchB/BchZ family. Protochlorophyllide reductase is composed of three subunits; ChlL, ChlN and ChlB. Forms a heterotetramer of two ChlB and two ChlN subunits. Requires [4Fe-4S] cluster as cofactor.

It carries out the reaction chlorophyllide a + oxidized 2[4Fe-4S]-[ferredoxin] + 2 ADP + 2 phosphate = protochlorophyllide a + reduced 2[4Fe-4S]-[ferredoxin] + 2 ATP + 2 H2O. The protein operates within porphyrin-containing compound metabolism; chlorophyll biosynthesis (light-independent). In terms of biological role, component of the dark-operative protochlorophyllide reductase (DPOR) that uses Mg-ATP and reduced ferredoxin to reduce ring D of protochlorophyllide (Pchlide) to form chlorophyllide a (Chlide). This reaction is light-independent. The NB-protein (ChlN-ChlB) is the catalytic component of the complex. The polypeptide is Light-independent protochlorophyllide reductase subunit B (Prochlorococcus marinus (strain NATL1A)).